The following is a 90-amino-acid chain: Putative regulatory protein Cbei_1140 (90 aa).

This sequence belongs to the RemA family.

The chain is Putative regulatory protein Cbei_1140 from Clostridium beijerinckii (strain ATCC 51743 / NCIMB 8052) (Clostridium acetobutylicum).